The primary structure comprises 214 residues: Triosephosphate isomerase (214 aa).

6–8 contacts substrate; it reads NLK. The active-site Electrophile is the histidine 85. Glutamate 133 functions as the Proton acceptor in the catalytic mechanism. Substrate contacts are provided by residues isoleucine 138, glycine 173, and 194–195; that span reads AS.

The protein belongs to the triosephosphate isomerase family. Homotetramer; dimer of dimers.

The protein resides in the cytoplasm. It catalyses the reaction D-glyceraldehyde 3-phosphate = dihydroxyacetone phosphate. It functions in the pathway carbohydrate biosynthesis; gluconeogenesis. It participates in carbohydrate degradation; glycolysis; D-glyceraldehyde 3-phosphate from glycerone phosphate: step 1/1. Involved in the gluconeogenesis. Catalyzes stereospecifically the conversion of dihydroxyacetone phosphate (DHAP) to D-glyceraldehyde-3-phosphate (G3P). In Halobacterium salinarum (strain ATCC 700922 / JCM 11081 / NRC-1) (Halobacterium halobium), this protein is Triosephosphate isomerase.